The chain runs to 424 residues: Enolase (424 aa).

A (2R)-2-phosphoglycerate-binding site is contributed by glutamine 162. Glutamate 204 functions as the Proton donor in the catalytic mechanism. Aspartate 241, glutamate 284, and aspartate 311 together coordinate Mg(2+). 4 residues coordinate (2R)-2-phosphoglycerate: lysine 336, arginine 365, serine 366, and lysine 387. The active-site Proton acceptor is lysine 336.

The protein belongs to the enolase family. Mg(2+) is required as a cofactor.

It localises to the cytoplasm. The protein localises to the secreted. The protein resides in the cell surface. It carries out the reaction (2R)-2-phosphoglycerate = phosphoenolpyruvate + H2O. It participates in carbohydrate degradation; glycolysis; pyruvate from D-glyceraldehyde 3-phosphate: step 4/5. Catalyzes the reversible conversion of 2-phosphoglycerate (2-PG) into phosphoenolpyruvate (PEP). It is essential for the degradation of carbohydrates via glycolysis. The sequence is that of Enolase from Agrobacterium fabrum (strain C58 / ATCC 33970) (Agrobacterium tumefaciens (strain C58)).